A 170-amino-acid polypeptide reads, in one-letter code: ATP synthase subunit b (170 aa).

A helical membrane pass occupies residues 4–24; the sequence is ILLLGLALAPVALFASQGAVE.

It belongs to the ATPase B chain family. As to quaternary structure, F-type ATPases have 2 components, F(1) - the catalytic core - and F(0) - the membrane proton channel. F(1) has five subunits: alpha(3), beta(3), gamma(1), delta(1), epsilon(1). F(0) has three main subunits: a(1), b(2) and c(10-14). The alpha and beta chains form an alternating ring which encloses part of the gamma chain. F(1) is attached to F(0) by a central stalk formed by the gamma and epsilon chains, while a peripheral stalk is formed by the delta and b chains.

Its subcellular location is the cell inner membrane. Functionally, f(1)F(0) ATP synthase produces ATP from ADP in the presence of a proton or sodium gradient. F-type ATPases consist of two structural domains, F(1) containing the extramembraneous catalytic core and F(0) containing the membrane proton channel, linked together by a central stalk and a peripheral stalk. During catalysis, ATP synthesis in the catalytic domain of F(1) is coupled via a rotary mechanism of the central stalk subunits to proton translocation. In terms of biological role, component of the F(0) channel, it forms part of the peripheral stalk, linking F(1) to F(0). The sequence is that of ATP synthase subunit b from Aliarcobacter butzleri (strain RM4018) (Arcobacter butzleri).